We begin with the raw amino-acid sequence, 200 residues long: Holliday junction branch migration complex subunit RuvA (200 aa).

A domain I region spans residues 1–64 (MYAYFRGRVV…EDALQLYGFS (64 aa)). A domain II region spans residues 65-143 (SEEEKQLFRL…KLSPPGAAAT (79 aa)). The tract at residues 144–154 (PAGAVQCGIRE) is flexible linker. The interval 154 to 200 (EDATNALLTLGFSRTAAQQAVAGVLEANPGGSVEDVVKSALLAMHNR) is domain III.

It belongs to the RuvA family. Homotetramer. Forms an RuvA(8)-RuvB(12)-Holliday junction (HJ) complex. HJ DNA is sandwiched between 2 RuvA tetramers; dsDNA enters through RuvA and exits via RuvB. An RuvB hexamer assembles on each DNA strand where it exits the tetramer. Each RuvB hexamer is contacted by two RuvA subunits (via domain III) on 2 adjacent RuvB subunits; this complex drives branch migration. In the full resolvosome a probable DNA-RuvA(4)-RuvB(12)-RuvC(2) complex forms which resolves the HJ.

The protein localises to the cytoplasm. In terms of biological role, the RuvA-RuvB-RuvC complex processes Holliday junction (HJ) DNA during genetic recombination and DNA repair, while the RuvA-RuvB complex plays an important role in the rescue of blocked DNA replication forks via replication fork reversal (RFR). RuvA specifically binds to HJ cruciform DNA, conferring on it an open structure. The RuvB hexamer acts as an ATP-dependent pump, pulling dsDNA into and through the RuvAB complex. HJ branch migration allows RuvC to scan DNA until it finds its consensus sequence, where it cleaves and resolves the cruciform DNA. The protein is Holliday junction branch migration complex subunit RuvA of Chlorobium luteolum (strain DSM 273 / BCRC 81028 / 2530) (Pelodictyon luteolum).